The primary structure comprises 487 residues: 3-octaprenyl-4-hydroxybenzoate carboxy-lyase (487 aa).

Residue Asn-172 coordinates Mn(2+). Prenylated FMN is bound by residues 175 to 177 (IYR), 189 to 191 (RWL), and 194 to 195 (RG). Residue Glu-238 coordinates Mn(2+). Asp-287 functions as the Proton donor in the catalytic mechanism.

This sequence belongs to the UbiD family. Homohexamer. Prenylated FMN is required as a cofactor. It depends on Mn(2+) as a cofactor.

It is found in the cell membrane. The catalysed reaction is a 4-hydroxy-3-(all-trans-polyprenyl)benzoate + H(+) = a 2-(all-trans-polyprenyl)phenol + CO2. Its pathway is cofactor biosynthesis; ubiquinone biosynthesis. Functionally, catalyzes the decarboxylation of 3-octaprenyl-4-hydroxy benzoate to 2-octaprenylphenol, an intermediate step in ubiquinone biosynthesis. This Actinobacillus pleuropneumoniae serotype 7 (strain AP76) protein is 3-octaprenyl-4-hydroxybenzoate carboxy-lyase.